A 95-amino-acid chain; its full sequence is Alpha-conotoxin VxXXB (95 aa).

The N-terminal stretch at 1 to 24 (MPKLAVVLLVLLILPLSYFDAAGG) is a signal peptide. Residues 25–45 (QAVQGDWRGNRLARDLQRGGR) constitute a propeptide that is removed on maturation. 4-carboxyglutamate is present on residues Glu48 and Glu50. Pro59 is modified (4-hydroxyproline; partial). Disulfide bonds link Cys64/Cys73, Cys69/Cys81, Cys74/Cys91, and Cys79/Cys93. The residue at position 75 (Pro75) is a 4-hydroxyproline; partial. Residue Pro94 is modified to 4-hydroxyproline; partial. Pro94 bears the Proline amide; in form [desGly-95]VxXXB mark.

This sequence belongs to the conotoxin D superfamily. Homodimer. Pseudo-homodimer (identical sequence, different post-translational modifications). In terms of tissue distribution, expressed by the venom duct.

Its subcellular location is the secreted. Functionally, alpha-conotoxins act on postsynaptic membranes, they bind to the nicotinic acetylcholine receptors (nAChR) and thus inhibit them. Through its two C-terminal domains, this homodimeric protein would bind to two nAChR allosteric sites, located outside the nAChR C-loop of the principal binding face and at the adjacent binding interface in a clockwise direction. It specifically blocks mammalian neuronal nAChR of the alpha-7/CHRNA7 (IC(50)=0.4 nM), alpha-3-beta-2/CHRNA3-CHRNB2 (IC(50)=8.4 nM) and alpha-4-beta-2/CHRNA4-CHRNB2 (IC(50)=228 nM) subtypes. It inhibits alpha-7/CHRNA7, alpha-3-beta-2/CHRNA3-CHRNB2 and alpha-4-beta-2/CHRNA4-CHRNB2 nAChR subtypes more efficiently than VxXXA and VxXXC. The polypeptide is Alpha-conotoxin VxXXB (Conus vexillum (Flag cone)).